Here is a 430-residue protein sequence, read N- to C-terminus: Gamma-glutamyl phosphate reductase (430 aa).

The protein belongs to the gamma-glutamyl phosphate reductase family.

It is found in the cytoplasm. It catalyses the reaction L-glutamate 5-semialdehyde + phosphate + NADP(+) = L-glutamyl 5-phosphate + NADPH + H(+). It functions in the pathway amino-acid biosynthesis; L-proline biosynthesis; L-glutamate 5-semialdehyde from L-glutamate: step 2/2. Its function is as follows. Catalyzes the NADPH-dependent reduction of L-glutamate 5-phosphate into L-glutamate 5-semialdehyde and phosphate. The product spontaneously undergoes cyclization to form 1-pyrroline-5-carboxylate. The sequence is that of Gamma-glutamyl phosphate reductase from Methylococcus capsulatus (strain ATCC 33009 / NCIMB 11132 / Bath).